Consider the following 501-residue polypeptide: Glycogen synthase 1 (501 aa).

K18 is a binding site for ADP-alpha-D-glucose.

This sequence belongs to the glycosyltransferase 1 family. Bacterial/plant glycogen synthase subfamily.

The catalysed reaction is [(1-&gt;4)-alpha-D-glucosyl](n) + ADP-alpha-D-glucose = [(1-&gt;4)-alpha-D-glucosyl](n+1) + ADP + H(+). It participates in glycan biosynthesis; glycogen biosynthesis. In terms of biological role, synthesizes alpha-1,4-glucan chains using ADP-glucose. In Geobacter sulfurreducens (strain ATCC 51573 / DSM 12127 / PCA), this protein is Glycogen synthase 1.